The following is a 132-amino-acid chain: Phosphoribosyl-AMP cyclohydrolase (132 aa).

Asp-76 contributes to the Mg(2+) binding site. Residue Cys-77 coordinates Zn(2+). Positions 78 and 80 each coordinate Mg(2+). Zn(2+) is bound by residues Cys-93 and Cys-100.

It belongs to the PRA-CH family. In terms of assembly, homodimer. It depends on Mg(2+) as a cofactor. Zn(2+) serves as cofactor.

It is found in the cytoplasm. The catalysed reaction is 1-(5-phospho-beta-D-ribosyl)-5'-AMP + H2O = 1-(5-phospho-beta-D-ribosyl)-5-[(5-phospho-beta-D-ribosylamino)methylideneamino]imidazole-4-carboxamide. It functions in the pathway amino-acid biosynthesis; L-histidine biosynthesis; L-histidine from 5-phospho-alpha-D-ribose 1-diphosphate: step 3/9. Its function is as follows. Catalyzes the hydrolysis of the adenine ring of phosphoribosyl-AMP. This Methanobrevibacter smithii (strain ATCC 35061 / DSM 861 / OCM 144 / PS) protein is Phosphoribosyl-AMP cyclohydrolase.